The chain runs to 354 residues: 4-hydroxy-3-methylbut-2-en-1-yl diphosphate synthase (flavodoxin) (354 aa).

4 residues coordinate [4Fe-4S] cluster: Cys-262, Cys-265, Cys-297, and Glu-304.

This sequence belongs to the IspG family. It depends on [4Fe-4S] cluster as a cofactor.

The catalysed reaction is (2E)-4-hydroxy-3-methylbut-2-enyl diphosphate + oxidized [flavodoxin] + H2O + 2 H(+) = 2-C-methyl-D-erythritol 2,4-cyclic diphosphate + reduced [flavodoxin]. The protein operates within isoprenoid biosynthesis; isopentenyl diphosphate biosynthesis via DXP pathway; isopentenyl diphosphate from 1-deoxy-D-xylulose 5-phosphate: step 5/6. Converts 2C-methyl-D-erythritol 2,4-cyclodiphosphate (ME-2,4cPP) into 1-hydroxy-2-methyl-2-(E)-butenyl 4-diphosphate. The chain is 4-hydroxy-3-methylbut-2-en-1-yl diphosphate synthase (flavodoxin) from Helicobacter hepaticus (strain ATCC 51449 / 3B1).